A 347-amino-acid chain; its full sequence is Probable dual-specificity RNA methyltransferase RlmN (347 aa).

Glu94 acts as the Proton acceptor in catalysis. A Radical SAM core domain is found at 100 to 334 (TETRTTACVS…AKVRHSRGKD (235 aa)). A disulfide bond links Cys107 and Cys339. [4Fe-4S] cluster contacts are provided by Cys114, Cys118, and Cys121. S-adenosyl-L-methionine is bound by residues 165–166 (GE), Ser197, 220–222 (SLH), and Asn296. Cys339 functions as the S-methylcysteine intermediate in the catalytic mechanism.

Belongs to the radical SAM superfamily. RlmN family. [4Fe-4S] cluster serves as cofactor.

It is found in the cytoplasm. The enzyme catalyses adenosine(2503) in 23S rRNA + 2 reduced [2Fe-2S]-[ferredoxin] + 2 S-adenosyl-L-methionine = 2-methyladenosine(2503) in 23S rRNA + 5'-deoxyadenosine + L-methionine + 2 oxidized [2Fe-2S]-[ferredoxin] + S-adenosyl-L-homocysteine. The catalysed reaction is adenosine(37) in tRNA + 2 reduced [2Fe-2S]-[ferredoxin] + 2 S-adenosyl-L-methionine = 2-methyladenosine(37) in tRNA + 5'-deoxyadenosine + L-methionine + 2 oxidized [2Fe-2S]-[ferredoxin] + S-adenosyl-L-homocysteine. Specifically methylates position 2 of adenine 2503 in 23S rRNA and position 2 of adenine 37 in tRNAs. The protein is Probable dual-specificity RNA methyltransferase RlmN of Flavobacterium psychrophilum (strain ATCC 49511 / DSM 21280 / CIP 103535 / JIP02/86).